The sequence spans 498 residues: Angiopoietin-1 (498 aa).

Residues 1 to 15 (MTVFLSFAFLAAILT) form the signal peptide. Residues 81–119 (QKLQHLEHVMENYTQWLQKLENYIVENMKSEMAQIQQNA) adopt a coiled-coil conformation. Residues asparagine 92, asparagine 122, asparagine 154, asparagine 243, and asparagine 295 are each glycosylated (N-linked (GlcNAc...) asparagine). Positions 153 to 261 (LNQTSRLEIQ…LELMDTVHNL (109 aa)) form a coiled coil. Residues 277-497 (REEEKPFRDC…STTMMIRPLD (221 aa)) form the Fibrinogen C-terminal domain. 2 cysteine pairs are disulfide-bonded: cysteine 286-cysteine 315 and cysteine 439-cysteine 452.

Homooligomer. Interacts with TEK/TIE2. Interacts with SVEP1/polydom. Interacts with THBD; this interaction significantly inhibits the generation of activated PC and TAFIa/CPB2 by the thrombin/thrombomodulin complex. Post-translationally, glycosylated.

Its subcellular location is the secreted. Binds and activates TEK/TIE2 receptor by inducing its dimerization and tyrosine phosphorylation. Plays an important role in the regulation of angiogenesis, endothelial cell survival, proliferation, migration, adhesion and cell spreading, reorganization of the actin cytoskeleton, but also maintenance of vascular quiescence. Required for normal angiogenesis and heart development during embryogenesis. After birth, activates or inhibits angiogenesis, depending on the context. Inhibits angiogenesis and promotes vascular stability in quiescent vessels, where endothelial cells have tight contacts. In quiescent vessels, ANGPT1 oligomers recruit TEK to cell-cell contacts, forming complexes with TEK molecules from adjoining cells, and this leads to preferential activation of phosphatidylinositol 3-kinase and the AKT1 signaling cascades. In migrating endothelial cells that lack cell-cell adhesions, ANGT1 recruits TEK to contacts with the extracellular matrix, leading to the formation of focal adhesion complexes, activation of PTK2/FAK and of the downstream kinases MAPK1/ERK2 and MAPK3/ERK1, and ultimately to the stimulation of sprouting angiogenesis. Mediates blood vessel maturation/stability. Implicated in endothelial developmental processes later and distinct from that of VEGF. Appears to play a crucial role in mediating reciprocal interactions between the endothelium and surrounding matrix and mesenchyme. The chain is Angiopoietin-1 (ANGPT1) from Homo sapiens (Human).